The chain runs to 935 residues: Isoleucine--tRNA ligase (935 aa).

A 'HIGH' region motif is present at residues 58–68 (PYANGSIHVGH). Glu-558 is an L-isoleucyl-5'-AMP binding site. Residues 599 to 603 (KMSKS) carry the 'KMSKS' region motif. Lys-602 is a binding site for ATP. Zn(2+) contacts are provided by Cys-897, Cys-900, Cys-917, and Cys-920.

This sequence belongs to the class-I aminoacyl-tRNA synthetase family. IleS type 1 subfamily. As to quaternary structure, monomer. Zn(2+) serves as cofactor.

It localises to the cytoplasm. The catalysed reaction is tRNA(Ile) + L-isoleucine + ATP = L-isoleucyl-tRNA(Ile) + AMP + diphosphate. Its function is as follows. Catalyzes the attachment of isoleucine to tRNA(Ile). As IleRS can inadvertently accommodate and process structurally similar amino acids such as valine, to avoid such errors it has two additional distinct tRNA(Ile)-dependent editing activities. One activity is designated as 'pretransfer' editing and involves the hydrolysis of activated Val-AMP. The other activity is designated 'posttransfer' editing and involves deacylation of mischarged Val-tRNA(Ile). The sequence is that of Isoleucine--tRNA ligase from Francisella tularensis subsp. novicida (strain U112).